The primary structure comprises 272 residues: 3-methyl-2-oxobutanoate hydroxymethyltransferase (272 aa).

Residues Asp43 and Asp82 each coordinate Mg(2+). 3-methyl-2-oxobutanoate-binding positions include 43-44, Asp82, and Lys112; that span reads DS. Residue Glu114 coordinates Mg(2+). Catalysis depends on Glu179, which acts as the Proton acceptor.

It belongs to the PanB family. Homodecamer; pentamer of dimers. The cofactor is Mg(2+).

The protein localises to the cytoplasm. The enzyme catalyses 3-methyl-2-oxobutanoate + (6R)-5,10-methylene-5,6,7,8-tetrahydrofolate + H2O = 2-dehydropantoate + (6S)-5,6,7,8-tetrahydrofolate. It functions in the pathway cofactor biosynthesis; (R)-pantothenate biosynthesis; (R)-pantoate from 3-methyl-2-oxobutanoate: step 1/2. Functionally, catalyzes the reversible reaction in which hydroxymethyl group from 5,10-methylenetetrahydrofolate is transferred onto alpha-ketoisovalerate to form ketopantoate. In Staphylococcus aureus (strain Newman), this protein is 3-methyl-2-oxobutanoate hydroxymethyltransferase.